The following is a 1938-amino-acid chain: Myosin-1 (1938 aa).

In terms of domain architecture, Myosin N-terminal SH3-like spans 33 to 82 (DAKTSVFVADPKESFVKATVQSREGGKVTAKTEAGATVTVKEDQVFPMNP). Phosphothreonine is present on residues T64 and T69. The 696-residue stretch at 86–781 (DKIEDMAMMT…LLGLLEEMRD (696 aa)) folds into the Myosin motor domain. Position 130 is an N6,N6,N6-trimethyllysine (K130). 179 to 186 (GESGAGKT) contributes to the ATP binding site. Y389 carries the post-translational modification Phosphotyrosine. T419 is subject to Phosphothreonine. The residue at position 424 (Y424) is a Phosphotyrosine. Phosphoserine is present on S625. Residues 658–680 (LNKLMTNLRSTHPHFVRCIIPNE) form an actin-binding region. Position 756 is a pros-methylhistidine (H756). The interval 760-774 (KFGHTKVFFKAGLLG) is actin-binding. Positions 784 to 813 (LAQLITRTQARCRGFLARVEYQKMVERRES) constitute an IQ domain. Residues 842–1938 (LLKSAETEKE…EVHTKIISEE (1097 aa)) adopt a coiled-coil conformation. 2 positions are modified to phosphoserine: S1091 and S1095. Disordered stretches follow at residues 1124–1146 (EIEA…SREL) and 1152–1171 (RLEE…KKRE). Residues 1127–1146 (AERASRAKAEKQRSDLSREL) are compositionally biased toward basic and acidic residues. S1161 and S1236 each carry phosphoserine. Residue T1240 is modified to Phosphothreonine. Residues S1242 and S1260 each carry the phosphoserine modification. Phosphothreonine is present on residues T1264 and T1285. S1287, S1291, S1302, and S1305 each carry phosphoserine. A Phosphotyrosine modification is found at Y1463. Position 1466 is a phosphothreonine (T1466). At S1473 the chain carries Phosphoserine. Y1491 carries the phosphotyrosine modification. Residue S1494 is modified to Phosphoserine. Residue T1500 is modified to Phosphothreonine. At S1513 the chain carries Phosphoserine. Residue T1516 is modified to Phosphothreonine. 7 positions are modified to phosphoserine: S1541, S1553, S1573, S1599, S1602, S1713, and S1725. T1729 and T1735 each carry phosphothreonine.

The protein belongs to the TRAFAC class myosin-kinesin ATPase superfamily. Myosin family. As to quaternary structure, muscle myosin is a hexameric protein that consists of 2 heavy chain subunits (MHC), 2 alkali light chain subunits (MLC) and 2 regulatory light chain subunits (MLC-2). Interacts with SLC26A5.

It localises to the cytoplasm. The protein localises to the myofibril. In terms of biological role, required for normal hearing. It plays a role in cochlear amplification of auditory stimuli, likely through the positive regulation of prestin (SLC26A5) activity and outer hair cell (OHC) electromotility. The chain is Myosin-1 (MYH1) from Bos taurus (Bovine).